We begin with the raw amino-acid sequence, 120 residues long: Putative cysteine proteinase inhibitor 11 (120 aa).

Residues 1–24 (MARHPGLLLILLAAVAAVATTSRA) form the signal peptide. Residues 73–77 (QVVQG) carry the Secondary area of contact motif.

Belongs to the cystatin family. Phytocystatin subfamily.

Its subcellular location is the secreted. Functionally, specific inhibitor of cysteine proteinases. Probably involved in the regulation of endogenous processes and in defense against pests and pathogens. The sequence is that of Putative cysteine proteinase inhibitor 11 from Oryza sativa subsp. japonica (Rice).